We begin with the raw amino-acid sequence, 740 residues long: Elongation factor 2 (740 aa).

The tr-type G domain occupies 23-264 (AQIRNAGTLA…MIIEHIPPPN (242 aa)). Residues 32 to 39 (AHVDHGKT), 98 to 102 (DTPGH), and 152 to 155 (NKID) contribute to the GTP site. His605 is subject to Diphthamide.

Belongs to the TRAFAC class translation factor GTPase superfamily. Classic translation factor GTPase family. EF-G/EF-2 subfamily.

The protein localises to the cytoplasm. Functionally, catalyzes the GTP-dependent ribosomal translocation step during translation elongation. During this step, the ribosome changes from the pre-translocational (PRE) to the post-translocational (POST) state as the newly formed A-site-bound peptidyl-tRNA and P-site-bound deacylated tRNA move to the P and E sites, respectively. Catalyzes the coordinated movement of the two tRNA molecules, the mRNA and conformational changes in the ribosome. The protein is Elongation factor 2 of Pyrobaculum aerophilum (strain ATCC 51768 / DSM 7523 / JCM 9630 / CIP 104966 / NBRC 100827 / IM2).